Consider the following 291-residue polypeptide: MLANLQHLSDIQYRVTQQSATETPFKNEFWNSYQPGFYLDVVSGELLFLSEDKFDSGCGWPSFSAPAYARAVIEKEDRTHNMLRTEVRSRNANSHLGHVFKDGPPERGGLRYCINSAALRFVAREEGTALFAAGCFWSTEAYFRRVKGVLRVRVGYTGGTTKSPTYRNVCTGTTGHAEAVEILFDPQVISYEDLLKHFFRMHDPTSLNKQGGDVGTQYRSAIFYLSGTQKQQAETLMGRYAGAGKFTRPLVTTLEEARDFYPAEEYHQDYLTKNPGGYCHVSLHLASEPLE.

A MsrB domain is found at 1–124; sequence MLANLQHLSD…NSAALRFVAR (124 aa). Cysteine 113 acts as the Nucleophile in catalysis. The tract at residues 127–284 is peptide methionine sulfoxide reductase A; the sequence is GTALFAAGCF…PGGYCHVSLH (158 aa). Cysteine 135 is a catalytic residue.

This sequence in the N-terminal section; belongs to the MsrB Met sulfoxide reductase family. The protein in the C-terminal section; belongs to the MsrA Met sulfoxide reductase family.

The enzyme catalyses L-methionyl-[protein] + [thioredoxin]-disulfide + H2O = L-methionyl-(R)-S-oxide-[protein] + [thioredoxin]-dithiol. It carries out the reaction L-methionyl-[protein] + [thioredoxin]-disulfide + H2O = L-methionyl-(S)-S-oxide-[protein] + [thioredoxin]-dithiol. The catalysed reaction is [thioredoxin]-disulfide + L-methionine + H2O = L-methionine (S)-S-oxide + [thioredoxin]-dithiol. In terms of biological role, has an important function as a repair enzyme for proteins that have been inactivated by oxidation. Catalyzes the reversible oxidation-reduction of methionine sulfoxide in proteins to methionine. The chain is Peptide methionine sulfoxide reductase MsrB/MsrA (msrAB) from Treponema pallidum (strain Nichols).